A 170-amino-acid polypeptide reads, in one-letter code: Protein SprT (170 aa).

The SprT-like domain occupies 22 to 165; sequence LQLANQHLGT…RQCGEKLQFI (144 aa). His-78 is a binding site for Zn(2+). The active site involves Glu-79. Zn(2+) is bound at residue His-82.

It belongs to the SprT family. Zn(2+) serves as cofactor.

Its subcellular location is the cytoplasm. The polypeptide is Protein SprT (Yersinia pseudotuberculosis serotype O:1b (strain IP 31758)).